Consider the following 138-residue polypeptide: Translation initiation factor 5A (138 aa).

Lysine 42 carries the hypusine modification.

This sequence belongs to the eIF-5A family.

It is found in the cytoplasm. In terms of biological role, functions by promoting the formation of the first peptide bond. This Pyrobaculum aerophilum (strain ATCC 51768 / DSM 7523 / JCM 9630 / CIP 104966 / NBRC 100827 / IM2) protein is Translation initiation factor 5A (eif5a).